A 707-amino-acid polypeptide reads, in one-letter code: Serine/threonine protein kinase UL97 (707 aa).

A compositionally biased stretch (low complexity) spans 1 to 14 (MSSALRSRARSASL). Disordered stretches follow at residues 1-33 (MSSALRSRARSASLGTTTQGWDPPPLRRPSRAR), 113-146 (DGEKEDAASDKENLRRPVVPSTSSRGSAASGDGY), 176-198 (FTGGSDPSDSVSGVRGGRKRPLR), and 231-264 (ESQDSAVASGPGRIPQPLSGSSGEESATAVEADS). The segment covering 113 to 127 (DGEKEDAASDKENLR) has biased composition (basic and acidic residues). Low complexity predominate over residues 178 to 188 (GGSDPSDSVSG). Residues 337 to 345 (LGQGSFGEV) and Lys359 contribute to the ATP site. Asp456 (proton acceptor) is an active-site residue.

Belongs to the protein kinase superfamily. Tyr protein kinase family. HCMV ganciclovir subfamily. In terms of assembly, interacts with UL83. Autophosphorylates on serine and threonine residues.

It is found in the virion. It carries out the reaction L-seryl-[protein] + ATP = O-phospho-L-seryl-[protein] + ADP + H(+). The enzyme catalyses L-threonyl-[protein] + ATP = O-phospho-L-threonyl-[protein] + ADP + H(+). Serine/threonine protein kinase that plays important roles in several processes including nuclear viral egress, viral replication or regulation of host cell cycle progression. Participates in the acquisition of tegument during virion morphogenesis in the nucleus. Phosphorylates the viral nuclear egress complex (NEC) subunits UL50 and UL53. Redistributes the host nuclear lamina by phosphorylating cellular Lamins-A/C. Plays a role in viral DNA synthesis by phosphorylating the DNA polymerase processivity factor UL44. Stimulates host cell cycle to support viral DNA synthesis by phosphorylating host retinoblastoma/RB1 protein. Additional substrates have been identified including host EF1D or H2B. Also phosphorylates host SAMHD1 and thereby counteracts its antiviral effect by reducing its dNTP hydrolase activity. This Human cytomegalovirus (strain AD169) (HHV-5) protein is Serine/threonine protein kinase UL97 (UL97).